A 376-amino-acid chain; its full sequence is Chaperone protein DnaJ (376 aa).

A J domain is found at 5-70 (DFYEVLGVER…SKRAAYDQYG (66 aa)). A CR-type zinc finger spans residues 135–213 (GTTVTIRVPT…CHGQGRVEEQ (79 aa)). Zn(2+) is bound by residues Cys-148, Cys-151, Cys-165, Cys-168, Cys-187, Cys-190, Cys-201, and Cys-204. CXXCXGXG motif repeat units lie at residues 148–155 (CKTCDGSG), 165–172 (CTTCGGIG), 187–194 (CPRCHGSG), and 201–208 (CGSCHGQG).

The protein belongs to the DnaJ family. As to quaternary structure, homodimer. Zn(2+) is required as a cofactor.

The protein localises to the cytoplasm. Participates actively in the response to hyperosmotic and heat shock by preventing the aggregation of stress-denatured proteins and by disaggregating proteins, also in an autonomous, DnaK-independent fashion. Unfolded proteins bind initially to DnaJ; upon interaction with the DnaJ-bound protein, DnaK hydrolyzes its bound ATP, resulting in the formation of a stable complex. GrpE releases ADP from DnaK; ATP binding to DnaK triggers the release of the substrate protein, thus completing the reaction cycle. Several rounds of ATP-dependent interactions between DnaJ, DnaK and GrpE are required for fully efficient folding. Also involved, together with DnaK and GrpE, in the DNA replication of plasmids through activation of initiation proteins. The polypeptide is Chaperone protein DnaJ (Stutzerimonas stutzeri (Pseudomonas stutzeri)).